Consider the following 219-residue polypeptide: Adenylate kinase (219 aa).

10–15 (GAGKGT) is a binding site for ATP. An NMP region spans residues 30–59 (ATGDLFRANISQGTDLGKQARAYMDAGQLV). AMP contacts are provided by residues T31, R36, 57 to 59 (QLV), 85 to 88 (GFPR), and Q92. Residues 126 to 164 (GRRVCRNNSAHVFHLTYNPPKAEGVCDACGGELYQRDDD) are LID. ATP-binding positions include R127 and 137-138 (VF). Residues R161 and R172 each coordinate AMP. G200 is a binding site for ATP.

Belongs to the adenylate kinase family. In terms of assembly, monomer.

The protein resides in the cytoplasm. The catalysed reaction is AMP + ATP = 2 ADP. The protein operates within purine metabolism; AMP biosynthesis via salvage pathway; AMP from ADP: step 1/1. Functionally, catalyzes the reversible transfer of the terminal phosphate group between ATP and AMP. Plays an important role in cellular energy homeostasis and in adenine nucleotide metabolism. The sequence is that of Adenylate kinase from Streptomyces griseus subsp. griseus (strain JCM 4626 / CBS 651.72 / NBRC 13350 / KCC S-0626 / ISP 5235).